Consider the following 355-residue polypeptide: Uroporphyrinogen decarboxylase (355 aa).

Residues 27–31, aspartate 77, tyrosine 154, threonine 209, and histidine 328 contribute to the substrate site; that span reads RQAGR.

Belongs to the uroporphyrinogen decarboxylase family. Homodimer.

It localises to the cytoplasm. It catalyses the reaction uroporphyrinogen III + 4 H(+) = coproporphyrinogen III + 4 CO2. The protein operates within porphyrin-containing compound metabolism; protoporphyrin-IX biosynthesis; coproporphyrinogen-III from 5-aminolevulinate: step 4/4. Catalyzes the decarboxylation of four acetate groups of uroporphyrinogen-III to yield coproporphyrinogen-III. The polypeptide is Uroporphyrinogen decarboxylase (Dechloromonas aromatica (strain RCB)).